A 290-amino-acid chain; its full sequence is Thymidylate synthase (290 aa).

DUMP-binding positions include Arg27 and Arg152–Arg153. The Nucleophile role is filled by Cys172. DUMP is bound by residues Arg192–Asp195, Asn203, and His233–Tyr235. (6R)-5,10-methylene-5,6,7,8-tetrahydrofolate is bound at residue Asp195. Ala289 lines the (6R)-5,10-methylene-5,6,7,8-tetrahydrofolate pocket.

It belongs to the thymidylate synthase family. As to quaternary structure, homodimer.

The enzyme catalyses dUMP + (6R)-5,10-methylene-5,6,7,8-tetrahydrofolate = 7,8-dihydrofolate + dTMP. The protein operates within pyrimidine metabolism; dTTP biosynthesis. The sequence is that of Thymidylate synthase (TS) from Ateles.